The sequence spans 240 residues: tRNA pseudouridine synthase B (240 aa).

The active-site Nucleophile is the aspartate 48.

This sequence belongs to the pseudouridine synthase TruB family. Type 1 subfamily.

The enzyme catalyses uridine(55) in tRNA = pseudouridine(55) in tRNA. Responsible for synthesis of pseudouridine from uracil-55 in the psi GC loop of transfer RNAs. The polypeptide is tRNA pseudouridine synthase B (Bacteroides thetaiotaomicron (strain ATCC 29148 / DSM 2079 / JCM 5827 / CCUG 10774 / NCTC 10582 / VPI-5482 / E50)).